Consider the following 349-residue polypeptide: Ferredoxin--NADP reductase (349 aa).

7 residues coordinate FAD: aspartate 35, glutamine 43, tyrosine 48, valine 88, phenylalanine 123, aspartate 288, and threonine 329.

Belongs to the ferredoxin--NADP reductase type 2 family. As to quaternary structure, homodimer. The cofactor is FAD.

It carries out the reaction 2 reduced [2Fe-2S]-[ferredoxin] + NADP(+) + H(+) = 2 oxidized [2Fe-2S]-[ferredoxin] + NADPH. In Colwellia psychrerythraea (strain 34H / ATCC BAA-681) (Vibrio psychroerythus), this protein is Ferredoxin--NADP reductase.